The sequence spans 677 residues: Methionine--tRNA ligase (677 aa).

A 'HIGH' region motif is present at residues 15–25 (PYANGSIHLGH). The Zn(2+) site is built by C146, C149, C159, and C162. The 'KMSKS' region motif lies at 333 to 337 (KMSKS). An ATP-binding site is contributed by K336. The tRNA-binding domain occupies 575–677 (DFAKVDLRVA…AGAKPGHQVK (103 aa)).

The protein belongs to the class-I aminoacyl-tRNA synthetase family. MetG type 1 subfamily. As to quaternary structure, homodimer. The cofactor is Zn(2+).

The protein localises to the cytoplasm. The enzyme catalyses tRNA(Met) + L-methionine + ATP = L-methionyl-tRNA(Met) + AMP + diphosphate. Functionally, is required not only for elongation of protein synthesis but also for the initiation of all mRNA translation through initiator tRNA(fMet) aminoacylation. This is Methionine--tRNA ligase from Escherichia coli O127:H6 (strain E2348/69 / EPEC).